The sequence spans 342 residues: 4-hydroxy-2-oxovalerate aldolase (342 aa).

One can recognise a Pyruvate carboxyltransferase domain in the interval 5 to 257; that stretch reads ITLHDMTLRD…DTGVDVWKIQ (253 aa). 13 to 14 serves as a coordination point for substrate; sequence RD. Residue Asp14 participates in Mn(2+) binding. His17 acts as the Proton acceptor in catalysis. The substrate site is built by Ser167 and His196. Residues His196 and His198 each coordinate Mn(2+). Position 287 (Tyr287) interacts with substrate.

This sequence belongs to the 4-hydroxy-2-oxovalerate aldolase family.

The enzyme catalyses (S)-4-hydroxy-2-oxopentanoate = acetaldehyde + pyruvate. This Acidovorax sp. (strain JS42) protein is 4-hydroxy-2-oxovalerate aldolase.